The primary structure comprises 622 residues: 1-deoxy-D-xylulose-5-phosphate synthase (622 aa).

Thiamine diphosphate-binding positions include histidine 80 and 121–123; that span reads GHS. Residue aspartate 152 coordinates Mg(2+). Thiamine diphosphate is bound by residues 153 to 154, asparagine 181, tyrosine 288, and glutamate 370; that span reads GA. Mg(2+) is bound at residue asparagine 181.

The protein belongs to the transketolase family. DXPS subfamily. As to quaternary structure, homodimer. Mg(2+) serves as cofactor. Requires thiamine diphosphate as cofactor.

It catalyses the reaction D-glyceraldehyde 3-phosphate + pyruvate + H(+) = 1-deoxy-D-xylulose 5-phosphate + CO2. It functions in the pathway metabolic intermediate biosynthesis; 1-deoxy-D-xylulose 5-phosphate biosynthesis; 1-deoxy-D-xylulose 5-phosphate from D-glyceraldehyde 3-phosphate and pyruvate: step 1/1. Its function is as follows. Catalyzes the acyloin condensation reaction between C atoms 2 and 3 of pyruvate and glyceraldehyde 3-phosphate to yield 1-deoxy-D-xylulose-5-phosphate (DXP). The protein is 1-deoxy-D-xylulose-5-phosphate synthase of Shewanella amazonensis (strain ATCC BAA-1098 / SB2B).